The sequence spans 409 residues: NADH-quinone oxidoreductase subunit D (409 aa).

It belongs to the complex I 49 kDa subunit family. NDH-1 is composed of 14 different subunits. Subunits NuoB, C, D, E, F, and G constitute the peripheral sector of the complex.

The protein resides in the cell inner membrane. It catalyses the reaction a quinone + NADH + 5 H(+)(in) = a quinol + NAD(+) + 4 H(+)(out). In terms of biological role, NDH-1 shuttles electrons from NADH, via FMN and iron-sulfur (Fe-S) centers, to quinones in the respiratory chain. The immediate electron acceptor for the enzyme in this species is believed to be ubiquinone. Couples the redox reaction to proton translocation (for every two electrons transferred, four hydrogen ions are translocated across the cytoplasmic membrane), and thus conserves the redox energy in a proton gradient. The chain is NADH-quinone oxidoreductase subunit D from Sulfurovum sp. (strain NBC37-1).